A 258-amino-acid polypeptide reads, in one-letter code: Thiazole synthase (258 aa).

Catalysis depends on K96, which acts as the Schiff-base intermediate with DXP. Residues G157, 183-184 (AG), and 205-206 (NT) contribute to the 1-deoxy-D-xylulose 5-phosphate site.

It belongs to the ThiG family. In terms of assembly, homotetramer. Forms heterodimers with either ThiH or ThiS.

The protein localises to the cytoplasm. It carries out the reaction [ThiS sulfur-carrier protein]-C-terminal-Gly-aminoethanethioate + 2-iminoacetate + 1-deoxy-D-xylulose 5-phosphate = [ThiS sulfur-carrier protein]-C-terminal Gly-Gly + 2-[(2R,5Z)-2-carboxy-4-methylthiazol-5(2H)-ylidene]ethyl phosphate + 2 H2O + H(+). The protein operates within cofactor biosynthesis; thiamine diphosphate biosynthesis. Its function is as follows. Catalyzes the rearrangement of 1-deoxy-D-xylulose 5-phosphate (DXP) to produce the thiazole phosphate moiety of thiamine. Sulfur is provided by the thiocarboxylate moiety of the carrier protein ThiS. In vitro, sulfur can be provided by H(2)S. In Alkaliphilus metalliredigens (strain QYMF), this protein is Thiazole synthase.